We begin with the raw amino-acid sequence, 649 residues long: Echinoderm microtubule-associated protein-like 2 (649 aa).

Residues 10 to 649 (KEVIFSMEEG…DTSVLQWRVA (640 aa)) are tandem atypical propeller in EMLs. WD repeat units follow at residues 56 to 93 (KLDWVYGYRGRDCRANLYLLPTGEVVYFVASVAVLYSV), 97 to 144 (RQRH…VWDS), 151 to 192 (HVLG…VWDW), 195 to 234 (ESKVVDSKCSNEAVLVATFHPTDPNLLITCGKSHIYFWSL), 241 to 280 (KRQGLFEKHEKPKYVLCVTFLEGGDVVTGDSGGNLYVWGK), 285 to 323 (ITQEVLGAHDGGVFALCALRDGTLVSGGGRDRRVVLWGS), 369 to 406 (FSLLVQGHVEELWGLATHPSRAQFVSCGQDKLVHLWSS), 410 to 447 (QPVWSRSIEDPARSAGFHPSGSVLAVGTVTGRWLLLDT), 452 to 489 (LVAIHTDGNEQISVVSFSPDGAYLAVGSHDNLVYVYTV), 495 to 535 (KVSR…YWDA), 564 to 602 (FGIWPEGADGTDINAVARSHDGNLLVSADDFGKVHLFSY), and 609 to 648 (ALSHKYGGHSSHVTNVAFLWDDSMVLTTGGKDTSVLQWRV).

This sequence belongs to the WD repeat EMAP family. Interacts with GRID2 and may also interact with GRID1. Interacts with EML3. Binds unpolymerized tubulins via its WD repeat region. In terms of tissue distribution, widely expressed in both brain and peripheral tissues, including brainstem and enrichment in the postsynaptic density, PSD.

It is found in the cytoplasm. It localises to the cytoskeleton. The protein localises to the spindle. In terms of biological role, tubulin binding protein that inhibits microtubule nucleation and growth, resulting in shorter microtubules. The chain is Echinoderm microtubule-associated protein-like 2 (Eml2) from Rattus norvegicus (Rat).